The primary structure comprises 127 residues: Prefoldin subunit 6 (127 aa).

Ala-2 carries the post-translational modification N-acetylalanine. The residue at position 21 (Lys-21) is an N6-acetyllysine. N6-acetyllysine; alternate is present on Lys-66. Lys-66 is covalently cross-linked (Glycyl lysine isopeptide (Lys-Gly) (interchain with G-Cter in SUMO1); alternate). Lys-66 participates in a covalent cross-link: Glycyl lysine isopeptide (Lys-Gly) (interchain with G-Cter in SUMO2); alternate.

Belongs to the prefoldin subunit beta family. As to quaternary structure, heterohexamer of two PFD-alpha type and four PFD-beta type subunits. Component of the PAQosome complex which is responsible for the biogenesis of several protein complexes and which consists of R2TP complex members RUVBL1, RUVBL2, RPAP3 and PIH1D1, URI complex members PFDN2, PFDN6, PDRG1, UXT and URI1 as well as ASDURF, POLR2E and DNAAF10/WDR92.

Binds specifically to cytosolic chaperonin (c-CPN) and transfers target proteins to it. Binds to nascent polypeptide chain and promotes folding in an environment in which there are many competing pathways for nonnative proteins. This is Prefoldin subunit 6 (Pfdn6) from Mus musculus (Mouse).